A 145-amino-acid chain; its full sequence is D-aminoacyl-tRNA deacylase (145 aa).

The short motif at 137 to 138 is the Gly-cisPro motif, important for rejection of L-amino acids element; the sequence is GP.

This sequence belongs to the DTD family. Homodimer.

The protein resides in the cytoplasm. The catalysed reaction is glycyl-tRNA(Ala) + H2O = tRNA(Ala) + glycine + H(+). It carries out the reaction a D-aminoacyl-tRNA + H2O = a tRNA + a D-alpha-amino acid + H(+). Functionally, an aminoacyl-tRNA editing enzyme that deacylates mischarged D-aminoacyl-tRNAs. Also deacylates mischarged glycyl-tRNA(Ala), protecting cells against glycine mischarging by AlaRS. Acts via tRNA-based rather than protein-based catalysis; rejects L-amino acids rather than detecting D-amino acids in the active site. By recycling D-aminoacyl-tRNA to D-amino acids and free tRNA molecules, this enzyme counteracts the toxicity associated with the formation of D-aminoacyl-tRNA entities in vivo and helps enforce protein L-homochirality. This chain is D-aminoacyl-tRNA deacylase, found in Klebsiella pneumoniae (strain 342).